A 434-amino-acid chain; its full sequence is T-box transcription factor T homolog (434 aa).

Residues 50–220 (LWKKFHKLTN…YNPFAKAFLD (171 aa)) constitute a DNA-binding region (T-box). Polar residues-rich tracts occupy residues 355–364 (SGFSHVSSPQ) and 376–385 (HPTSSHQHNL). Residues 355-385 (SGFSHVSSPQSPLPTGLFRNPHPTSSHQHNL) form a disordered region.

As to expression, in the developing embryo, expressed in the mesenchyme founder cells, vegetal plate of the mesenchyme blastula, extending tip of the invaginating archenteron and, later, in the secondary mesenchyme cells.

It localises to the nucleus. Involved in the transcriptional regulation of genes required for mesoderm differentiation. The chain is T-box transcription factor T homolog from Hemicentrotus pulcherrimus (Sea urchin).